The chain runs to 125 residues: Large ribosomal subunit protein bL19 (125 aa).

This sequence belongs to the bacterial ribosomal protein bL19 family.

This protein is located at the 30S-50S ribosomal subunit interface and may play a role in the structure and function of the aminoacyl-tRNA binding site. The sequence is that of Large ribosomal subunit protein bL19 from Synechococcus sp. (strain JA-2-3B'a(2-13)) (Cyanobacteria bacterium Yellowstone B-Prime).